Reading from the N-terminus, the 563-residue chain is Testis-expressed basic protein 1 (563 aa).

A helical membrane pass occupies residues Val3–Leu23. Residues Gly56–Pro81 form a disordered region. Positions Tyr69 to Tyr79 are enriched in basic and acidic residues. A helical membrane pass occupies residues Glu99 to Ile119. The tract at residues Ser311–Glu563 is disordered. The segment covering Gln367–Val383 has biased composition (basic and acidic residues). Over residues Lys384–Glu395 the composition is skewed to low complexity. 2 stretches are compositionally biased toward basic and acidic residues: residues Gln412–Glu447 and Glu485–Lys544.

Its subcellular location is the membrane. This is Testis-expressed basic protein 1 from Homo sapiens (Human).